Reading from the N-terminus, the 439-residue chain is 23S rRNA (uracil(1939)-C(5))-methyltransferase RlmD (439 aa).

The region spanning 5-63 (RKLEHKTYKLNIESFSHEGRGIAHFEDKIIFVSDALPGELVIANRTFSCAKFEEADAKE) is the TRAM domain. Residues C76, C82, C85, and C164 each coordinate [4Fe-4S] cluster. Positions 271, 300, 305, 321, 348, and 370 each coordinate S-adenosyl-L-methionine. C396 acts as the Nucleophile in catalysis.

It belongs to the class I-like SAM-binding methyltransferase superfamily. RNA M5U methyltransferase family. RlmD subfamily.

It catalyses the reaction uridine(1939) in 23S rRNA + S-adenosyl-L-methionine = 5-methyluridine(1939) in 23S rRNA + S-adenosyl-L-homocysteine + H(+). In terms of biological role, catalyzes the formation of 5-methyl-uridine at position 1939 (m5U1939) in 23S rRNA. The protein is 23S rRNA (uracil(1939)-C(5))-methyltransferase RlmD of Vesicomyosocius okutanii subsp. Calyptogena okutanii (strain HA).